We begin with the raw amino-acid sequence, 305 residues long: tRNA dimethylallyltransferase (305 aa).

8–15 (GPTGTGKS) contributes to the ATP binding site. Residue 10-15 (TGTGKS) coordinates substrate.

The protein belongs to the IPP transferase family. As to quaternary structure, monomer. Requires Mg(2+) as cofactor.

The catalysed reaction is adenosine(37) in tRNA + dimethylallyl diphosphate = N(6)-dimethylallyladenosine(37) in tRNA + diphosphate. Functionally, catalyzes the transfer of a dimethylallyl group onto the adenine at position 37 in tRNAs that read codons beginning with uridine, leading to the formation of N6-(dimethylallyl)adenosine (i(6)A). The chain is tRNA dimethylallyltransferase from Mycobacterium sp. (strain KMS).